Here is a 340-residue protein sequence, read N- to C-terminus: Putative Ig-like domain-containing protein C1 (340 aa).

The Ig-like domain occupies 207–294; it reads PTVTVTGIER…SSPRVMVPTI (88 aa).

This Sus scrofa (Pig) protein is Putative Ig-like domain-containing protein C1.